A 361-amino-acid chain; its full sequence is Queuine tRNA-ribosyltransferase (361 aa).

The active-site Proton acceptor is the Asp-89. Residues 89–93, Asp-143, Gln-185, and Gly-212 each bind substrate; that span reads DSGGF. Residues 243–249 form an RNA binding region; it reads GVGTPED. Asp-262 functions as the Nucleophile in the catalytic mechanism. The tract at residues 267–271 is RNA binding; important for wobble base 34 recognition; the sequence is TRNAR. Zn(2+)-binding residues include Cys-300, Cys-302, Cys-305, and His-331.

Belongs to the queuine tRNA-ribosyltransferase family. In terms of assembly, homodimer. Within each dimer, one monomer is responsible for RNA recognition and catalysis, while the other monomer binds to the replacement base PreQ1. The cofactor is Zn(2+).

The enzyme catalyses 7-aminomethyl-7-carbaguanine + guanosine(34) in tRNA = 7-aminomethyl-7-carbaguanosine(34) in tRNA + guanine. Its pathway is tRNA modification; tRNA-queuosine biosynthesis. Functionally, catalyzes the base-exchange of a guanine (G) residue with the queuine precursor 7-aminomethyl-7-deazaguanine (PreQ1) at position 34 (anticodon wobble position) in tRNAs with GU(N) anticodons (tRNA-Asp, -Asn, -His and -Tyr). Catalysis occurs through a double-displacement mechanism. The nucleophile active site attacks the C1' of nucleotide 34 to detach the guanine base from the RNA, forming a covalent enzyme-RNA intermediate. The proton acceptor active site deprotonates the incoming PreQ1, allowing a nucleophilic attack on the C1' of the ribose to form the product. After dissociation, two additional enzymatic reactions on the tRNA convert PreQ1 to queuine (Q), resulting in the hypermodified nucleoside queuosine (7-(((4,5-cis-dihydroxy-2-cyclopenten-1-yl)amino)methyl)-7-deazaguanosine). The protein is Queuine tRNA-ribosyltransferase of Nitrosomonas eutropha (strain DSM 101675 / C91 / Nm57).